We begin with the raw amino-acid sequence, 539 residues long: T-complex protein 1 subunit zeta (539 aa).

This sequence belongs to the TCP-1 chaperonin family. In terms of assembly, heterooligomeric complex of about 850 to 900 kDa that forms two stacked rings, 12 to 16 nm in diameter.

The protein localises to the cytoplasm. Molecular chaperone; assists the folding of proteins upon ATP hydrolysis. Known to play a role, in vitro, in the folding of actin and tubulin. In Dictyostelium discoideum (Social amoeba), this protein is T-complex protein 1 subunit zeta (cct6).